A 256-amino-acid chain; its full sequence is Gramicidin S biosynthesis protein GrsT (256 aa).

The active site involves serine 95.

Belongs to the thioesterase family.

The protein operates within antibiotic biosynthesis; gramicidin S biosynthesis. Functionally, probable thioesterase involved in the biosynthesis of gramicidin S. The polypeptide is Gramicidin S biosynthesis protein GrsT (grsT) (Aneurinibacillus migulanus (Bacillus migulanus)).